Reading from the N-terminus, the 564-residue chain is Kelch repeat and BTB domain-containing protein 1 (564 aa).

In terms of domain architecture, BTB spans 21-88 (CDINIVINDE…IYGIPLSLTN (68 aa)). The BACK domain maps to 123 to 219 (CIDFYIYADK…SLLSPQVIKS (97 aa)). Kelch repeat units lie at residues 252–297 (IELI…VLDN), 298–346 (IIYM…ADDE), 347–395 (YIYC…MLNG), 397–441 (IYVI…VHDG), 442–492 (KIYI…SAHN), and 494–539 (LYVG…CEPI).

As to quaternary structure, interacts (via BTB domain) with host CUL3.

The protein localises to the host cytoplasm. Probable substrate-specific adapter of CUL3-containing E3 ubiquitin-protein ligases which mediate the ubiquitination and subsequent proteasomal degradation of host target proteins. The protein is Kelch repeat and BTB domain-containing protein 1 (KBTB1) of Cowpox virus (strain GRI-90 / Grishak) (CPV).